The sequence spans 140 residues: Protein PsiE homolog (140 aa).

Helical transmembrane passes span 16–36, 57–77, 85–105, and 110–130; these read IVLQYILNVALICLGVVLSVF, YHLIDSIVVFFLYFEFIVMII, HFPLRYFIYIGITAIVRLIII, and PLDLLLYACAIFVLISALFIA.

It belongs to the PsiE family.

The protein resides in the cell membrane. In Bacillus cereus (strain ATCC 14579 / DSM 31 / CCUG 7414 / JCM 2152 / NBRC 15305 / NCIMB 9373 / NCTC 2599 / NRRL B-3711), this protein is Protein PsiE homolog.